The chain runs to 352 residues: Chorismate synthase (352 aa).

NADP(+) is bound at residue R48. FMN is bound by residues 125–127 (RSS), 238–239 (NA), G278, 293–297 (KPTSS), and R319.

It belongs to the chorismate synthase family. As to quaternary structure, homotetramer. It depends on FMNH2 as a cofactor.

The catalysed reaction is 5-O-(1-carboxyvinyl)-3-phosphoshikimate = chorismate + phosphate. Its pathway is metabolic intermediate biosynthesis; chorismate biosynthesis; chorismate from D-erythrose 4-phosphate and phosphoenolpyruvate: step 7/7. Catalyzes the anti-1,4-elimination of the C-3 phosphate and the C-6 proR hydrogen from 5-enolpyruvylshikimate-3-phosphate (EPSP) to yield chorismate, which is the branch point compound that serves as the starting substrate for the three terminal pathways of aromatic amino acid biosynthesis. This reaction introduces a second double bond into the aromatic ring system. The polypeptide is Chorismate synthase (Legionella pneumophila (strain Paris)).